A 723-amino-acid polypeptide reads, in one-letter code: Peroxisomal bifunctional enzyme (723 aa).

Residues 1–282 are enoyl-CoA hydratase / isomerase; that stretch reads MAEYTRLHNA…FAERKANKWS (282 aa). At lysine 38 the chain carries N6-succinyllysine. Glycine 101 contacts substrate. Lysine 165 bears the N6-acetyllysine; alternate mark. Position 165 is an N6-succinyllysine; alternate (lysine 165). Lysine 171 is modified (N6-acetyllysine). An N6-acetyllysine; alternate modification is found at lysine 219. N6-succinyllysine; alternate is present on lysine 219. Lysine 250 is subject to N6-acetyllysine. An N6-succinyllysine mark is found at lysine 280 and lysine 290. The segment at 283–572 is 3-hydroxyacyl-CoA dehydrogenase; the sequence is TPSGASWKTA…DVLCELGRFG (290 aa). N6-acetyllysine occurs at positions 346, 350, and 464. Lysine 532 bears the N6-succinyllysine mark. Phosphothreonine is present on threonine 548. At lysine 577 the chain carries N6-succinyllysine. N6-acetyllysine; alternate is present on residues lysine 584, lysine 591, and lysine 710. An N6-succinyllysine; alternate mark is found at lysine 584, lysine 591, and lysine 710. Serine 718 carries the phosphoserine modification. A Microbody targeting signal motif is present at residues 721 to 723; it reads SKL. N6-succinyllysine is present on lysine 722.

This sequence in the N-terminal section; belongs to the enoyl-CoA hydratase/isomerase family. The protein in the C-terminal section; belongs to the 3-hydroxyacyl-CoA dehydrogenase family. As to quaternary structure, monomer. Acetylated, leading to enhanced enzyme activity. Acetylation is enhanced by up to 80% after treatment either with trichostin A (TSA) or with nicotinamide (NAM) with highest increase on Lys-346. Acetylation and enzyme activity increased by about 1.5% on addition of fatty acids. Liver and kidney. Strongly expressed in the terminal segments of the proximal tubule. Lower amounts seen in the brain.

Its subcellular location is the peroxisome. It catalyses the reaction a (3S)-3-hydroxyacyl-CoA = a (2E)-enoyl-CoA + H2O. It carries out the reaction a 4-saturated-(3S)-3-hydroxyacyl-CoA = a (3E)-enoyl-CoA + H2O. The catalysed reaction is a (3Z)-enoyl-CoA = a 4-saturated (2E)-enoyl-CoA. The enzyme catalyses a (3E)-enoyl-CoA = a 4-saturated (2E)-enoyl-CoA. It catalyses the reaction a (3S)-3-hydroxyacyl-CoA + NAD(+) = a 3-oxoacyl-CoA + NADH + H(+). It carries out the reaction (2S,3S)-3-hydroxy-2-methylbutanoyl-CoA = (2E)-2-methylbut-2-enoyl-CoA + H2O. The catalysed reaction is (3S)-hydroxyhexadecanoyl-CoA + NAD(+) = 3-oxohexadecanoyl-CoA + NADH + H(+). The enzyme catalyses (3S)-hydroxyhexadecanoyl-CoA = (2E)-hexadecenoyl-CoA + H2O. It catalyses the reaction (2E)-hexadecenedioyl-CoA + H2O = (3S)-hydroxyhexadecanedioyl-CoA. It carries out the reaction (3S)-hydroxyhexadecanedioyl-CoA + NAD(+) = 3-oxohexadecanedioyl-CoA + NADH + H(+). The catalysed reaction is (3E,5Z)-tetradecadienoyl-CoA = (2E,5Z)-tetradecadienoyl-CoA. The enzyme catalyses (3E,5Z)-octadienoyl-CoA = (2E,5Z)-octadienoyl-CoA. It catalyses the reaction (3S)-hydroxydecanoyl-CoA + NAD(+) = 3-oxodecanoyl-CoA + NADH + H(+). It carries out the reaction (3E)-decenoyl-CoA = (2E)-decenoyl-CoA. The catalysed reaction is (3Z)-hexenoyl-CoA = (2E)-hexenoyl-CoA. The enzyme catalyses (3E)-hexenoyl-CoA = (2E)-hexenoyl-CoA. It catalyses the reaction (3S)-hydroxydecanoyl-CoA = (2E)-decenoyl-CoA + H2O. It carries out the reaction (3S)-hydroxyhexanoyl-CoA = (2E)-hexenoyl-CoA + H2O. It participates in lipid metabolism; fatty acid beta-oxidation. With respect to regulation, enzyme activity enhanced by acetylation. Functionally, peroxisomal trifunctional enzyme possessing 2-enoyl-CoA hydratase, 3-hydroxyacyl-CoA dehydrogenase, and delta 3, delta 2-enoyl-CoA isomerase activities. Catalyzes two of the four reactions of the long chain fatty acids peroxisomal beta-oxidation pathway. Can also use branched-chain fatty acids such as 2-methyl-2E-butenoyl-CoA as a substrate, which is hydrated into (2S,3S)-3-hydroxy-2-methylbutanoyl-CoA. Optimal isomerase for 2,5 double bonds into 3,5 form isomerization in a range of enoyl-CoA species. Also able to isomerize both 3-cis and 3-trans double bonds into the 2-trans form in a range of enoyl-CoA species. With HSD17B4, catalyzes the hydration of trans-2-enoyl-CoA and the dehydrogenation of 3-hydroxyacyl-CoA, but with opposite chiral specificity. Regulates the amount of medium-chain dicarboxylic fatty acids which are essential regulators of all fatty acid oxidation pathways. Also involved in the degradation of long-chain dicarboxylic acids through peroxisomal beta-oxidation. In Homo sapiens (Human), this protein is Peroxisomal bifunctional enzyme.